The following is a 67-amino-acid chain: Large ribosomal subunit protein uL29 (67 aa).

It belongs to the universal ribosomal protein uL29 family. Part of the 50S ribosomal subunit. Contacts protein L23 and trigger factor when it is complexed with the ribosome.

In terms of biological role, binds the 23S rRNA. One of the proteins that surrounds the polypeptide exit tunnel on the outside of the subunit. This Deinococcus radiodurans (strain ATCC 13939 / DSM 20539 / JCM 16871 / CCUG 27074 / LMG 4051 / NBRC 15346 / NCIMB 9279 / VKM B-1422 / R1) protein is Large ribosomal subunit protein uL29 (rpmC).